A 728-amino-acid chain; its full sequence is MGLNFREKAWILLGILCCSSLICSVKAIVTYDRKAVIINGQRRILLSGSIHYPRSTPEMWPDLIQKAKDGGLDVIQTYVFWNGHEPSPGQYYFEDRYDLVKFIKVVQQAGLYVHLRIGPYVCAEWNFGGFPVWLKYVPGMVFRTDNEPFKAAMQKFTEKIVRMMKEEKLFETQGGPIILSQIENEYGPIEWEIGAPGKAYTKWVAEMAQGLSTGVPWIMCKQDDAPNSIINTCNGFYCENFKPNSDNKPKMWTENWTGWFTEFGGAVPYRPAEDIALSVARFIQNGGSFINYYMYHGGTNFDRTAGEFIATSYDYDAPLDEYGLPREPKYSHLKRLHKVIKLCEPALVSADPTVTSLGDKQEAHVFKSKSSCAAFLSNYNTSSAARVLFGGSTYDLPPWSVSILPDCKTEYYNTAKVQVRTSSIHMKMVPTNTPFSWGSYNEEIPSANDNGTFSQDGLVEQISITRDKTDYFWYLTDITISPDEKFLTGEDPLLTIGSAGHALHVFVNGQLAGTAYGSLEKPKLTFSQKIKLHAGVNKLALLSTAAGLPNVGVHYETWNTGVLGPVTLNGVNSGTWDMTKWKWSYKIGTKGEALSVHTLAGSSTVEWKEGSLVAKKQPLTWYKSTFDSPTGNEPLALDMNTMGKGQMWINGQNIGRHWPAYTARGKCERCSYAGTFTEKKCLSNCGEASQRWYHVPRSWLKPTNNLVIVLEEWGGEPNGISLVKRTAK.

An N-terminal signal peptide occupies residues 1-27 (MGLNFREKAWILLGILCCSSLICSVKA). Catalysis depends on Glu-185, which acts as the Proton donor. Glu-254 (nucleophile) is an active-site residue. Asn-255, Asn-380, and Asn-450 each carry an N-linked (GlcNAc...) asparagine glycan.

It belongs to the glycosyl hydrolase 35 family. As to expression, ubiquitous, with higher expression levels in roots and siliques.

The protein localises to the secreted. It is found in the extracellular space. Its subcellular location is the apoplast. It carries out the reaction Hydrolysis of terminal non-reducing beta-D-galactose residues in beta-D-galactosides.. In Arabidopsis thaliana (Mouse-ear cress), this protein is Beta-galactosidase 12 (BGAL12).